The following is an 858-amino-acid chain: Elongation factor 2 (858 aa).

The 346-residue stretch at 17-362 folds into the tr-type G domain; that stretch reads ANIRNMSVIA…MITIHLPSPV (346 aa). Position 26-33 (26-33) interacts with GTP; that stretch reads AHVDHGKS. At Thr54 the chain carries Phosphothreonine. The residue at position 57 (Thr57) is a Phosphothreonine; by EEF2K. Thr59 bears the Phosphothreonine mark. Lys152 bears the N6-succinyllysine mark. Residues 158–161 and 216–218 contribute to the GTP site; these read NKMD and SGL. Residue Lys235 is modified to N6-acetyllysine. The residue at position 239 (Lys239) is an N6-acetyllysine; alternate. Lys239 participates in a covalent cross-link: Glycyl lysine isopeptide (Lys-Gly) (interchain with G-Cter in SUMO1); alternate. Residue Tyr265 is modified to Phosphotyrosine; by CSK. N6-acetyllysine; alternate is present on Lys272. Lys272 bears the N6-succinyllysine; alternate mark. Residue Lys275 is modified to N6-acetyllysine. Lys322 is covalently cross-linked (Glycyl lysine isopeptide (Lys-Gly) (interchain with G-Cter in SUMO)). A Phosphoserine modification is found at Ser325. Tyr373 carries the phosphotyrosine; by CSK modification. The residue at position 435 (Thr435) is a Phosphothreonine. 2 positions are modified to N6-acetyllysine: Lys439 and Lys445. Ser502 is modified (phosphoserine). Lys525 bears the N6,N6,N6-trimethyllysine; by EEF2KMT mark. Lys529 participates in a covalent cross-link: Glycyl lysine isopeptide (Lys-Gly) (interchain with G-Cter in SUMO). Lys572 carries the N6-succinyllysine modification. The residue at position 595 (Ser595) is a Phosphoserine; by CDK2. An N6-acetyllysine modification is found at Lys619. Diphthamide is present on His715.

It belongs to the TRAFAC class translation factor GTPase superfamily. Classic translation factor GTPase family. EF-G/EF-2 subfamily. As to quaternary structure, binds to 80S ribosomes. Actively translating ribosomes show mutually exclusive binding of eIF5a (EIF5A or EIF5A2) and EEF2/eEF2. Interacts with SERBP1; interaction sequesters EEF2/eEF2 at the A-site of the ribosome, thereby blocking the interaction sites of the mRNA-tRNA complex, promoting ribosome stabilization and hibernation. Interacts with HABP4; interaction takes place at the A-site of hibernating ribosomes and promotes ribosome stabilization. Component of the mRNA surveillance SURF complex, at least composed of ERF1, ERF3 (ERF3A or ERF3B), EEF2, UPF1/RENT1, SMG1, SMG8 and SMG9. Interacts with RBPMS2. In terms of processing, phosphorylation by EF-2 kinase completely inactivates EF-2; it requires prior phosphorylation by CDK2 at Ser-595 during mitotic prometaphase. Phosphorylation by CSK promotes SUMOylation, proteolytic cleavage, and nuclear translocation if the C-terminal fragment. Diphthamide is 2-[3-carboxyamido-3-(trimethyl-ammonio)propyl]histidine. Post-translationally, ISGylated. In terms of processing, proteolytically processed at two sites following phosphorylation by CSK. SUMOylated following phosphorylation by CSK, promotes proteolytic cleavage.

Its subcellular location is the cytoplasm. It localises to the nucleus. The catalysed reaction is GTP + H2O = GDP + phosphate + H(+). Functionally, catalyzes the GTP-dependent ribosomal translocation step during translation elongation. During this step, the ribosome changes from the pre-translocational (PRE) to the post-translocational (POST) state as the newly formed A-site-bound peptidyl-tRNA and P-site-bound deacylated tRNA move to the P and E sites, respectively. Catalyzes the coordinated movement of the two tRNA molecules, the mRNA and conformational changes in the ribosome. The protein is Elongation factor 2 (EEF2) of Bos taurus (Bovine).